Here is a 92-residue protein sequence, read N- to C-terminus: Large ribosomal subunit protein bL28 (92 aa).

Belongs to the bacterial ribosomal protein bL28 family.

In Borrelia hermsii (strain HS1 / DAH), this protein is Large ribosomal subunit protein bL28.